A 214-amino-acid polypeptide reads, in one-letter code: Fruiting body protein SC14 (214 aa).

The N-terminal stretch at 1 to 18 is a signal peptide; sequence MKLNIAILLAALAATASA. Asn61 and Asn144 each carry an N-linked (GlcNAc...) asparagine glycan. The region spanning 72-195 is the SCP domain; the sequence is LTAHNDERAQ…KSLWYYVCNY (124 aa).

Belongs to the CRISP family.

The protein localises to the secreted. The protein is Fruiting body protein SC14 (SC14) of Schizophyllum commune (Split gill fungus).